Here is a 31-residue protein sequence, read N- to C-terminus: Cytochrome b6-f complex subunit 6 (31 aa).

A helical transmembrane segment spans residues 4–24; sequence IISYFGLLLATLTFTIVLFVG.

This sequence belongs to the PetL family. The 4 large subunits of the cytochrome b6-f complex are cytochrome b6, subunit IV (17 kDa polypeptide, PetD), cytochrome f and the Rieske protein, while the 4 small subunits are PetG, PetL, PetM and PetN. The complex functions as a dimer.

Its subcellular location is the plastid. It is found in the chloroplast thylakoid membrane. Functionally, component of the cytochrome b6-f complex, which mediates electron transfer between photosystem II (PSII) and photosystem I (PSI), cyclic electron flow around PSI, and state transitions. PetL is important for photoautotrophic growth as well as for electron transfer efficiency and stability of the cytochrome b6-f complex. The polypeptide is Cytochrome b6-f complex subunit 6 (Staurastrum punctulatum (Green alga)).